A 697-amino-acid polypeptide reads, in one-letter code: Elongation factor G (697 aa).

The 276-residue stretch at 10–285 (AKTRNIGIMA…GVIDYLPSPL (276 aa)) folds into the tr-type G domain. GTP is bound by residues 19 to 26 (AHIDAGKT), 83 to 87 (DTPGH), and 137 to 140 (NKMD).

The protein belongs to the TRAFAC class translation factor GTPase superfamily. Classic translation factor GTPase family. EF-G/EF-2 subfamily.

It is found in the cytoplasm. Catalyzes the GTP-dependent ribosomal translocation step during translation elongation. During this step, the ribosome changes from the pre-translocational (PRE) to the post-translocational (POST) state as the newly formed A-site-bound peptidyl-tRNA and P-site-bound deacylated tRNA move to the P and E sites, respectively. Catalyzes the coordinated movement of the two tRNA molecules, the mRNA and conformational changes in the ribosome. The protein is Elongation factor G of Lactobacillus acidophilus (strain ATCC 700396 / NCK56 / N2 / NCFM).